The following is a 497-amino-acid chain: Glutamate--tRNA ligase (497 aa).

The short motif at 13 to 23 is the 'HIGH' region element; that stretch reads PSPTGDPHVGT. Residues 253-257 carry the 'KMSKS' region motif; it reads KISKR. Residue lysine 256 coordinates ATP.

It belongs to the class-I aminoacyl-tRNA synthetase family. Glutamate--tRNA ligase type 1 subfamily. As to quaternary structure, monomer.

The protein resides in the cytoplasm. The catalysed reaction is tRNA(Glu) + L-glutamate + ATP = L-glutamyl-tRNA(Glu) + AMP + diphosphate. In terms of biological role, catalyzes the attachment of glutamate to tRNA(Glu) in a two-step reaction: glutamate is first activated by ATP to form Glu-AMP and then transferred to the acceptor end of tRNA(Glu). This Cutibacterium acnes (strain DSM 16379 / KPA171202) (Propionibacterium acnes) protein is Glutamate--tRNA ligase.